The sequence spans 442 residues: Thymidine phosphorylase (442 aa).

This sequence belongs to the thymidine/pyrimidine-nucleoside phosphorylase family. Homodimer.

The catalysed reaction is thymidine + phosphate = 2-deoxy-alpha-D-ribose 1-phosphate + thymine. The protein operates within pyrimidine metabolism; dTMP biosynthesis via salvage pathway; dTMP from thymine: step 1/2. In terms of biological role, the enzymes which catalyze the reversible phosphorolysis of pyrimidine nucleosides are involved in the degradation of these compounds and in their utilization as carbon and energy sources, or in the rescue of pyrimidine bases for nucleotide synthesis. The chain is Thymidine phosphorylase from Vibrio vulnificus (strain CMCP6).